The primary structure comprises 265 residues: Probable ribose-5-phosphate isomerase 2 (265 aa).

Ala2 bears the N-acetylalanine mark. Residue Ser96 is modified to Phosphoserine.

The protein belongs to the ribose 5-phosphate isomerase family.

It localises to the cytoplasm. The catalysed reaction is aldehydo-D-ribose 5-phosphate = D-ribulose 5-phosphate. Its pathway is carbohydrate degradation; pentose phosphate pathway; D-ribose 5-phosphate from D-ribulose 5-phosphate (non-oxidative stage): step 1/1. In terms of biological role, catalyzes the reversible conversion of ribose-5-phosphate to ribulose 5-phosphate. This chain is Probable ribose-5-phosphate isomerase 2 (RPI2), found in Arabidopsis thaliana (Mouse-ear cress).